The sequence spans 274 residues: NH(3)-dependent NAD(+) synthetase (274 aa).

46-53 (GISGGQDS) contacts ATP. Asp-52 provides a ligand contact to Mg(2+). A deamido-NAD(+)-binding site is contributed by Arg-140. An ATP-binding site is contributed by Thr-160. Glu-165 contributes to the Mg(2+) binding site. Residues Lys-173 and Asp-180 each contribute to the deamido-NAD(+) site. Residues Lys-189 and Thr-211 each contribute to the ATP site. 260-261 (HK) is a binding site for deamido-NAD(+).

This sequence belongs to the NAD synthetase family. As to quaternary structure, homodimer.

It catalyses the reaction deamido-NAD(+) + NH4(+) + ATP = AMP + diphosphate + NAD(+) + H(+). It participates in cofactor biosynthesis; NAD(+) biosynthesis; NAD(+) from deamido-NAD(+) (ammonia route): step 1/1. Its function is as follows. Catalyzes the ATP-dependent amidation of deamido-NAD to form NAD. Uses ammonia as a nitrogen source. The sequence is that of NH(3)-dependent NAD(+) synthetase from Streptococcus suis (strain 05ZYH33).